Reading from the N-terminus, the 275-residue chain is 4-hydroxy-tetrahydrodipicolinate reductase (275 aa).

Residues 13 to 18, 108 to 110, and 134 to 137 contribute to the NAD(+) site; these read GAAGKM, GTT, and VPNF. H164 serves as the catalytic Proton donor/acceptor. H165 lines the (S)-2,3,4,5-tetrahydrodipicolinate pocket. K168 (proton donor) is an active-site residue. 174 to 175 is a binding site for (S)-2,3,4,5-tetrahydrodipicolinate; the sequence is GT.

It belongs to the DapB family.

The protein resides in the cytoplasm. The enzyme catalyses (S)-2,3,4,5-tetrahydrodipicolinate + NAD(+) + H2O = (2S,4S)-4-hydroxy-2,3,4,5-tetrahydrodipicolinate + NADH + H(+). The catalysed reaction is (S)-2,3,4,5-tetrahydrodipicolinate + NADP(+) + H2O = (2S,4S)-4-hydroxy-2,3,4,5-tetrahydrodipicolinate + NADPH + H(+). Its pathway is amino-acid biosynthesis; L-lysine biosynthesis via DAP pathway; (S)-tetrahydrodipicolinate from L-aspartate: step 4/4. In terms of biological role, catalyzes the conversion of 4-hydroxy-tetrahydrodipicolinate (HTPA) to tetrahydrodipicolinate. In Gloeothece citriformis (strain PCC 7424) (Cyanothece sp. (strain PCC 7424)), this protein is 4-hydroxy-tetrahydrodipicolinate reductase.